The following is a 493-amino-acid chain: 11S globulin seed storage protein G3 (493 aa).

The signal sequence occupies residues Met1 to Ala20. Intrachain disulfides connect Cys32–Cys65 and Cys103–Cys312. In terms of domain architecture, Cupin type-1 1 spans Ile37–Gln248. Disordered stretches follow at residues Pro190–Asn229 and Ile269–Asn305. 2 stretches are compositionally biased toward low complexity: residues Gln191–Gly221 and Arg280–Gly298. The 150-residue stretch at Val318–Gln467 folds into the Cupin type-1 2 domain.

It belongs to the 11S seed storage protein (globulins) family. Hexamer; each subunit is composed of an acidic and a basic chain derived from a single precursor and linked by a disulfide bond.

In terms of biological role, this is a seed storage protein. In Helianthus annuus (Common sunflower), this protein is 11S globulin seed storage protein G3 (HAG3).